A 328-amino-acid chain; its full sequence is GTP 3',8-cyclase (328 aa).

The region spanning 1–229 (MNQVDYLRIS…ESQVRGAGPA (229 aa)) is the Radical SAM core domain. Arg-8 contacts GTP. Residues Cys-15 and Cys-19 each contribute to the [4Fe-4S] cluster site. Tyr-21 is an S-adenosyl-L-methionine binding site. Cys-22 lines the [4Fe-4S] cluster pocket. Arg-60 is a GTP binding site. Position 64 (Gly-64) interacts with S-adenosyl-L-methionine. Thr-91 contacts GTP. Residue Ser-115 participates in S-adenosyl-L-methionine binding. Residue Lys-155 participates in GTP binding. Position 189 (Met-189) interacts with S-adenosyl-L-methionine. Positions 252 and 255 each coordinate [4Fe-4S] cluster. 257 to 259 (RMR) provides a ligand contact to GTP. Residue Cys-269 participates in [4Fe-4S] cluster binding.

Belongs to the radical SAM superfamily. MoaA family. As to quaternary structure, monomer and homodimer. The cofactor is [4Fe-4S] cluster.

It catalyses the reaction GTP + AH2 + S-adenosyl-L-methionine = (8S)-3',8-cyclo-7,8-dihydroguanosine 5'-triphosphate + 5'-deoxyadenosine + L-methionine + A + H(+). Its pathway is cofactor biosynthesis; molybdopterin biosynthesis. Its function is as follows. Catalyzes the cyclization of GTP to (8S)-3',8-cyclo-7,8-dihydroguanosine 5'-triphosphate. This Nostoc punctiforme (strain ATCC 29133 / PCC 73102) protein is GTP 3',8-cyclase.